A 239-amino-acid polypeptide reads, in one-letter code: Fatty acid metabolism regulator protein (239 aa).

Residues 6-74 (QSPAGFAEEY…HGKPTKVNNF (69 aa)) enclose the HTH gntR-type domain. The segment at residues 34-53 (ERELSELIGVTRTTLREVLQ) is a DNA-binding region (H-T-H motif).

In terms of assembly, homodimer.

Its subcellular location is the cytoplasm. Functionally, multifunctional regulator of fatty acid metabolism. The protein is Fatty acid metabolism regulator protein of Enterobacter sp. (strain 638).